Here is a 371-residue protein sequence, read N- to C-terminus: Anhydro-N-acetylmuramic acid kinase (371 aa).

Residue glycine 12–aspartate 20 coordinates ATP.

Belongs to the anhydro-N-acetylmuramic acid kinase family.

The catalysed reaction is 1,6-anhydro-N-acetyl-beta-muramate + ATP + H2O = N-acetyl-D-muramate 6-phosphate + ADP + H(+). The protein operates within amino-sugar metabolism; 1,6-anhydro-N-acetylmuramate degradation. It functions in the pathway cell wall biogenesis; peptidoglycan recycling. Catalyzes the specific phosphorylation of 1,6-anhydro-N-acetylmuramic acid (anhMurNAc) with the simultaneous cleavage of the 1,6-anhydro ring, generating MurNAc-6-P. Is required for the utilization of anhMurNAc either imported from the medium or derived from its own cell wall murein, and thus plays a role in cell wall recycling. This chain is Anhydro-N-acetylmuramic acid kinase, found in Rhizobium rhizogenes (strain K84 / ATCC BAA-868) (Agrobacterium radiobacter).